We begin with the raw amino-acid sequence, 300 residues long: MLSAAEGILLSIATVEAGLGVLGNTFIALVNCMDWAKNNKLSMTGFLLIGLATSRIFIVWLLTLDAYAKLFYPSKYFSSSLIEIISYIWMTVNHLTVWFATSLSIFYFLKIANFSDCVFLWLKRRTDKAFVFLLGCLLTSWVISFSFVVKVMKDGKVNHRNRTSEMYWEKRQFTINYVFLNIGVISLFMMTLTACFLLIMSLWRHSRQMQSGVSGFRDLNTEAHVKAIKFLISFIILFVLYFIGVSIEIICIFIPENKLLFIFGFTTASIYPCCHSFILILSNSQLKQAFVKVLQGLKFF.

The Extracellular portion of the chain corresponds to 1–7 (MLSAAEG). The helical transmembrane segment at 8–28 (ILLSIATVEAGLGVLGNTFIA) threads the bilayer. The Cytoplasmic portion of the chain corresponds to 29 to 43 (LVNCMDWAKNNKLSM). Residues 44-64 (TGFLLIGLATSRIFIVWLLTL) traverse the membrane as a helical segment. The Extracellular portion of the chain corresponds to 65 to 87 (DAYAKLFYPSKYFSSSLIEIISY). Residues 88 to 108 (IWMTVNHLTVWFATSLSIFYF) form a helical membrane-spanning segment. The Cytoplasmic portion of the chain corresponds to 109–128 (LKIANFSDCVFLWLKRRTDK). A helical membrane pass occupies residues 129–149 (AFVFLLGCLLTSWVISFSFVV). Residues 150–181 (KVMKDGKVNHRNRTSEMYWEKRQFTINYVFLN) are Extracellular-facing. Asn-161 carries N-linked (GlcNAc...) asparagine glycosylation. The helical transmembrane segment at 182-202 (IGVISLFMMTLTACFLLIMSL) threads the bilayer. Topologically, residues 203-233 (WRHSRQMQSGVSGFRDLNTEAHVKAIKFLIS) are cytoplasmic. Residues 234–254 (FIILFVLYFIGVSIEIICIFI) form a helical membrane-spanning segment. Residues 255 to 259 (PENKL) are Extracellular-facing. The chain crosses the membrane as a helical span at residues 260-280 (LFIFGFTTASIYPCCHSFILI). At 281–300 (LSNSQLKQAFVKVLQGLKFF) the chain is on the cytoplasmic side.

This sequence belongs to the G-protein coupled receptor T2R family. Expressed in subsets of taste receptor cells of the tongue and palate epithelium and exclusively in gustducin-positive cells. Expressed in gastric and duodenal tissues.

Its subcellular location is the membrane. Functionally, gustducin-coupled cycloheximide receptor implicated in the perception of bitter compounds in the oral cavity and the gastrointestinal tract. Signals through PLCB2 and the calcium-regulated cation channel TRPM5. The polypeptide is Taste receptor type 2 member 105 (Tas2r105) (Mus musculus (Mouse)).